The chain runs to 305 residues: U6 small nuclear RNA (adenine-(43)-N(6))-methyltransferase (305 aa).

S-adenosyl-L-methionine contacts are provided by Arg-85, Gly-110, Glu-133, Ser-164, and Asn-186. Residues 194–217 form a disordered region; the sequence is SPNPFGGNTRNPQRRPAPNNVRTG.

This sequence belongs to the methyltransferase superfamily. METTL16/RlmF family.

It carries out the reaction adenosine in U6 snRNA + S-adenosyl-L-methionine = N(6)-methyladenosine in U6 snRNA + S-adenosyl-L-homocysteine + H(+). In terms of biological role, RNA N6-methyltransferase that mediates N6-methylation of adenine of U6 small nuclear RNA (U6 snRNA). This chain is U6 small nuclear RNA (adenine-(43)-N(6))-methyltransferase, found in Drosophila pseudoobscura pseudoobscura (Fruit fly).